A 426-amino-acid polypeptide reads, in one-letter code: Gamma-glutamyl phosphate reductase (426 aa).

Belongs to the gamma-glutamyl phosphate reductase family.

The protein localises to the cytoplasm. The enzyme catalyses L-glutamate 5-semialdehyde + phosphate + NADP(+) = L-glutamyl 5-phosphate + NADPH + H(+). The protein operates within amino-acid biosynthesis; L-proline biosynthesis; L-glutamate 5-semialdehyde from L-glutamate: step 2/2. Its function is as follows. Catalyzes the NADPH-dependent reduction of L-glutamate 5-phosphate into L-glutamate 5-semialdehyde and phosphate. The product spontaneously undergoes cyclization to form 1-pyrroline-5-carboxylate. The sequence is that of Gamma-glutamyl phosphate reductase from Cupriavidus metallidurans (strain ATCC 43123 / DSM 2839 / NBRC 102507 / CH34) (Ralstonia metallidurans).